The primary structure comprises 68 residues: DNA-directed RNA polymerase subunit omega (68 aa).

This sequence belongs to the RNA polymerase subunit omega family. The RNAP catalytic core consists of 2 alpha, 1 beta, 1 beta' and 1 omega subunit. When a sigma factor is associated with the core the holoenzyme is formed, which can initiate transcription.

The enzyme catalyses RNA(n) + a ribonucleoside 5'-triphosphate = RNA(n+1) + diphosphate. Functionally, promotes RNA polymerase assembly. Latches the N- and C-terminal regions of the beta' subunit thereby facilitating its interaction with the beta and alpha subunits. The chain is DNA-directed RNA polymerase subunit omega from Ruminiclostridium cellulolyticum (strain ATCC 35319 / DSM 5812 / JCM 6584 / H10) (Clostridium cellulolyticum).